A 310-amino-acid chain; its full sequence is Signal peptidase I (310 aa).

A helical transmembrane segment spans residues Leu-5 to Ile-25. Topologically, residues Leu-26–Ser-57 are cytoplasmic. A helical membrane pass occupies residues Phe-58 to Ile-78. At Pro-79–Tyr-310 the chain is on the extracellular side. Active-site residues include Ser-82 and Lys-137.

It belongs to the peptidase S26 family.

The protein resides in the cell membrane. It catalyses the reaction Cleavage of hydrophobic, N-terminal signal or leader sequences from secreted and periplasmic proteins.. This chain is Signal peptidase I (lepB), found in Buchnera aphidicola subsp. Baizongia pistaciae (strain Bp).